The sequence spans 737 residues: Probable serine/threonine-protein kinase DDB_G0269628 (737 aa).

The Protein kinase domain occupies 8–488 (YKLIKDLRSG…TLQKMDTSLL (481 aa)). ATP is bound by residues 14–22 (LRSGGEGKA) and lysine 36. Disordered regions lie at residues 155 to 251 (NTIQ…KKCS) and 278 to 298 (TTAA…SSSN). The span at 156–167 (TIQHSHSSSSLV) shows a compositional bias: polar residues. Residues 168 to 229 (NGTTSPTNAT…PSSPSSPLSP (62 aa)) are compositionally biased toward low complexity. The active-site Proton acceptor is the aspartate 349.

Belongs to the protein kinase superfamily. NEK Ser/Thr protein kinase family. NIMA subfamily.

The catalysed reaction is L-seryl-[protein] + ATP = O-phospho-L-seryl-[protein] + ADP + H(+). It carries out the reaction L-threonyl-[protein] + ATP = O-phospho-L-threonyl-[protein] + ADP + H(+). The sequence is that of Probable serine/threonine-protein kinase DDB_G0269628 from Dictyostelium discoideum (Social amoeba).